Here is a 511-residue protein sequence, read N- to C-terminus: Cobyric acid synthase (511 aa).

The 193-residue stretch at 251-443 folds into the GATase cobBQ-type domain; it reads LLDIAIICLP…IHGIFDNDVF (193 aa). The active-site Nucleophile is cysteine 332. Residue histidine 435 is part of the active site.

It belongs to the CobB/CobQ family. CobQ subfamily.

The protein operates within cofactor biosynthesis; adenosylcobalamin biosynthesis. Its function is as follows. Catalyzes amidations at positions B, D, E, and G on adenosylcobyrinic A,C-diamide. NH(2) groups are provided by glutamine, and one molecule of ATP is hydrogenolyzed for each amidation. This chain is Cobyric acid synthase, found in Listeria monocytogenes serotype 4a (strain HCC23).